The primary structure comprises 149 residues: Transcriptional repressor NrdR (149 aa).

A zinc finger spans residues 3–34; the sequence is CPFCSHQETQVVETRVSEDGDFIRRRRQCGAC. One can recognise an ATP-cone domain in the interval 49–139; sequence PTVVKKDGRR…VYRSFEDIDE (91 aa).

This sequence belongs to the NrdR family. Zn(2+) serves as cofactor.

Functionally, negatively regulates transcription of bacterial ribonucleotide reductase nrd genes and operons by binding to NrdR-boxes. The protein is Transcriptional repressor NrdR of Acidovorax sp. (strain JS42).